We begin with the raw amino-acid sequence, 249 residues long: 4-hydroxy-tetrahydrodipicolinate reductase (249 aa).

NAD(+) is bound by residues D32, 74–76 (GTT), and 99–102 (SANF). H134 functions as the Proton donor/acceptor in the catalytic mechanism. H135 is a (S)-2,3,4,5-tetrahydrodipicolinate binding site. K138 serves as the catalytic Proton donor. 144-145 (GT) provides a ligand contact to (S)-2,3,4,5-tetrahydrodipicolinate.

The protein belongs to the DapB family.

The protein localises to the cytoplasm. It carries out the reaction (S)-2,3,4,5-tetrahydrodipicolinate + NAD(+) + H2O = (2S,4S)-4-hydroxy-2,3,4,5-tetrahydrodipicolinate + NADH + H(+). The enzyme catalyses (S)-2,3,4,5-tetrahydrodipicolinate + NADP(+) + H2O = (2S,4S)-4-hydroxy-2,3,4,5-tetrahydrodipicolinate + NADPH + H(+). The protein operates within amino-acid biosynthesis; L-lysine biosynthesis via DAP pathway; (S)-tetrahydrodipicolinate from L-aspartate: step 4/4. Its function is as follows. Catalyzes the conversion of 4-hydroxy-tetrahydrodipicolinate (HTPA) to tetrahydrodipicolinate. This Chlorobaculum parvum (strain DSM 263 / NCIMB 8327) (Chlorobium vibrioforme subsp. thiosulfatophilum) protein is 4-hydroxy-tetrahydrodipicolinate reductase.